Here is a 105-residue protein sequence, read N- to C-terminus: MAARKTYILKLYVAGNTPNSMRALNTLREILENEFKGVYALKVIDVLKQPQLAEEDKILATPTLAKILPPPVRRIIGDLSDREKVLIGLDLLFDELTETEYSGDK.

The protein belongs to the KaiB family. May undergo a major conformational rearrangment; in the free state forms homooligomers. When bound to KaiC switches to a monomeric thioredoxin-fold (KaiB(fs)). The active oscillator complex is probably KaiC(6):KaiB(6).

Component of the KaiBC clock protein complex, which constitutes the main circadian regulator in cyanobacteria; it may modify the ATPase activity of KaiC. Functionally, may be a metamorphic protein which reversibly switches between an inactive tetrameric fold and a rare, thioredoxin-like monomeric fold (KaiB(fs)). KaiB(fs) binds phospho-KaiC, and perhaps clock output effectors. This is Circadian clock oscillator protein KaiB from Prochlorococcus marinus (strain MIT 9312).